The primary structure comprises 438 residues: Methylenetetrahydrofolate--tRNA-(uracil-5-)-methyltransferase TrmFO (438 aa).

Gly7–Gly12 serves as a coordination point for FAD.

The protein belongs to the MnmG family. TrmFO subfamily. Requires FAD as cofactor.

Its subcellular location is the cytoplasm. The enzyme catalyses uridine(54) in tRNA + (6R)-5,10-methylene-5,6,7,8-tetrahydrofolate + NADH + H(+) = 5-methyluridine(54) in tRNA + (6S)-5,6,7,8-tetrahydrofolate + NAD(+). It carries out the reaction uridine(54) in tRNA + (6R)-5,10-methylene-5,6,7,8-tetrahydrofolate + NADPH + H(+) = 5-methyluridine(54) in tRNA + (6S)-5,6,7,8-tetrahydrofolate + NADP(+). Catalyzes the folate-dependent formation of 5-methyl-uridine at position 54 (M-5-U54) in all tRNAs. This Sulfurihydrogenibium sp. (strain YO3AOP1) protein is Methylenetetrahydrofolate--tRNA-(uracil-5-)-methyltransferase TrmFO.